Here is a 175-residue protein sequence, read N- to C-terminus: Crossover junction endodeoxyribonuclease RuvC (175 aa).

Active-site residues include D16, E76, and D148. Mg(2+)-binding residues include D16, E76, and D148.

The protein belongs to the RuvC family. In terms of assembly, homodimer which binds Holliday junction (HJ) DNA. The HJ becomes 2-fold symmetrical on binding to RuvC with unstacked arms; it has a different conformation from HJ DNA in complex with RuvA. In the full resolvosome a probable DNA-RuvA(4)-RuvB(12)-RuvC(2) complex forms which resolves the HJ. Mg(2+) serves as cofactor.

The protein resides in the cytoplasm. The catalysed reaction is Endonucleolytic cleavage at a junction such as a reciprocal single-stranded crossover between two homologous DNA duplexes (Holliday junction).. In terms of biological role, the RuvA-RuvB-RuvC complex processes Holliday junction (HJ) DNA during genetic recombination and DNA repair. Endonuclease that resolves HJ intermediates. Cleaves cruciform DNA by making single-stranded nicks across the HJ at symmetrical positions within the homologous arms, yielding a 5'-phosphate and a 3'-hydroxyl group; requires a central core of homology in the junction. The consensus cleavage sequence is 5'-(A/T)TT(C/G)-3'. Cleavage occurs on the 3'-side of the TT dinucleotide at the point of strand exchange. HJ branch migration catalyzed by RuvA-RuvB allows RuvC to scan DNA until it finds its consensus sequence, where it cleaves and resolves the cruciform DNA. The sequence is that of Crossover junction endodeoxyribonuclease RuvC from Bradyrhizobium sp. (strain BTAi1 / ATCC BAA-1182).